The following is a 447-amino-acid chain: UMP-CMP kinase 2, mitochondrial (447 aa).

Residues 1-73 constitute a mitochondrion transit peptide; the sequence is MALISRPRAP…ELLGPPGRSY (73 aa). 259–266 provides a ligand contact to ATP; the sequence is GLDATGKT. Residues 380–412 are a coiled coil; it reads EERVRRLQGRGQEKTKEEAELEANNVFRQKVEM.

It belongs to the thymidylate kinase family. As to expression, strongly expressed in the brain.

It localises to the mitochondrion. The enzyme catalyses CMP + ATP = CDP + ADP. The catalysed reaction is dCMP + ATP = dCDP + ADP. It catalyses the reaction a 2'-deoxyribonucleoside 5'-diphosphate + ATP = a 2'-deoxyribonucleoside 5'-triphosphate + ADP. It carries out the reaction a ribonucleoside 5'-diphosphate + ATP = a ribonucleoside 5'-triphosphate + ADP. In terms of biological role, mitochondrial nucleotide monophosphate kinase needed for salvage dNTP synthesis that mediates immunomodulatory and antiviral activities through IFN-dependent and IFN-independent pathways. Restricts the replication of multiple viruses including flaviviruses or coronaviruses. Together with viperin/RSAD2 and ddhCTP, suppresses the replication of several coronaviruses through inhibition of the viral RNA-dependent RNA polymerase activities. Concerning flaviviruses, restricts RNA translation when localized to the mitochondria independently of its kinase activity. Is able to phosphorylate dUMP, dCMP, CMP, UMP and monophosphates of the pyrimidine nucleoside analogs ddC, dFdC, araC, BVDU and FdUrd with ATP as phosphate donor. Efficacy is highest for dUMP followed by dCMP while CMP and UMP are poor substrates. Controls therefore mitochondrial DNA synthesis by supplying required deoxyribonucleotides. CMPK2-dependent mitochondrial DNA synthesis is necessary for the production of oxidized mitochondrial DNA fragments after exposure to NLRP3 activators. In turn, cytosolic oxidized mtDNA associates with the NLRP3 inflammasome complex and is required for its activation. This chain is UMP-CMP kinase 2, mitochondrial (Cmpk2), found in Mus musculus (Mouse).